Here is a 262-residue protein sequence, read N- to C-terminus: MSRYLRPPNTSLFVRNVADDTRSEDLRREFGRYGPIVDVYVPLDFYTRRPRGFAYVQFEDVRDAEDALHNLDRKWICGRQIEIQFAQGDRKTPNQMKAKEGRNVYSSSRYDDYDRYRRSRSRSYERRRSRSRSFDYNYRRSYSPRNSRPTGRPRRSRSHSDNDRFKHRNRSFSRSKSNSRSRSKSQPKKEMKAKSRSRSASHTKTRGTSKTDSKTHYKSGSRYEKESRKKEPPRSKSQSRSQSRSRSKSRSRSWTSPKSSGH.

The RRM domain occupies 10 to 88 (TSLFVRNVAD…RQIEIQFAQG (79 aa)). Residues S23, S106, and S108 each carry the phosphoserine modification. Residues 116-126 (YRRSRSRSYER) are compositionally biased toward basic and acidic residues. The segment at 116-262 (YRRSRSRSYE…SWTSPKSSGH (147 aa)) is disordered. Phosphoserine occurs at positions 129, 131, and 133. Low complexity predominate over residues 134 to 150 (FDYNYRRSYSPRNSRPT). Phosphoserine occurs at positions 158, 160, and 168. Composition is skewed to basic residues over residues 165-186 (FKHR…SKSQ) and 194-207 (KSRS…KTRG). A compositionally biased stretch (basic and acidic residues) spans 209 to 234 (SKTDSKTHYKSGSRYEKESRKKEPPR). Positions 252–262 (RSWTSPKSSGH) are enriched in low complexity.

The protein belongs to the splicing factor SR family. The phosphorylated but not the dephosphorylated form interacts with TRA2B/SFRS10. The dephosphorylated form interacts with SNRNP70. Isoform 1 interacts with FUS C-terminus. Isoform 3 interacts with FUS C-terminus. Interacts with YTHDC1, leading to inhibit RNA-binding activity of SRSF10. Post-translationally, phosphorylated. Fully dephosphorylated in mitosis and partially dephosphorylated on heat shock. Widely expressed.

It localises to the nucleus speckle. It is found in the cytoplasm. In terms of biological role, splicing factor that in its dephosphorylated form acts as a general repressor of pre-mRNA splicing. Seems to interfere with the U1 snRNP 5'-splice recognition of SNRNP70. Required for splicing repression in M-phase cells and after heat shock. Also acts as a splicing factor that specifically promotes exon skipping during alternative splicing. Interaction with YTHDC1, a RNA-binding protein that recognizes and binds N6-methyladenosine (m6A)-containing RNAs, prevents SRSF10 from binding to its mRNA-binding sites close to m6A-containing regions, leading to inhibit exon skipping during alternative splicing. May be involved in regulation of alternative splicing in neurons, with isoform 1 acting as a positive and isoform 3 as a negative regulator. The protein is Serine/arginine-rich splicing factor 10 (SRSF10) of Homo sapiens (Human).